We begin with the raw amino-acid sequence, 357 residues long: Peptide chain release factor 1 (357 aa).

Residue Gln-236 is modified to N5-methylglutamine.

It belongs to the prokaryotic/mitochondrial release factor family. Post-translationally, methylated by PrmC. Methylation increases the termination efficiency of RF1.

Its subcellular location is the cytoplasm. In terms of biological role, peptide chain release factor 1 directs the termination of translation in response to the peptide chain termination codons UAG and UAA. The polypeptide is Peptide chain release factor 1 (Mycobacterium avium (strain 104)).